Consider the following 299-residue polypeptide: Oxygen-dependent coproporphyrinogen-III oxidase (299 aa).

A substrate-binding site is contributed by Ser92. A divalent metal cation contacts are provided by His96 and His106. Catalysis depends on His106, which acts as the Proton donor. Substrate is bound at residue 108 to 110 (NVR). A divalent metal cation-binding residues include His145 and His175. Residues 239-274 (YVEFNLVYDRGTLFGLQSGGRAESILMSLPPRVRWE) form an important for dimerization region. Substrate is bound at residue 257–259 (GGR).

The protein belongs to the aerobic coproporphyrinogen-III oxidase family. In terms of assembly, homodimer. A divalent metal cation is required as a cofactor.

The protein resides in the cytoplasm. It catalyses the reaction coproporphyrinogen III + O2 + 2 H(+) = protoporphyrinogen IX + 2 CO2 + 2 H2O. Its pathway is porphyrin-containing compound metabolism; protoporphyrin-IX biosynthesis; protoporphyrinogen-IX from coproporphyrinogen-III (O2 route): step 1/1. In terms of biological role, involved in the heme biosynthesis. Catalyzes the aerobic oxidative decarboxylation of propionate groups of rings A and B of coproporphyrinogen-III to yield the vinyl groups in protoporphyrinogen-IX. The sequence is that of Oxygen-dependent coproporphyrinogen-III oxidase from Xanthomonas oryzae pv. oryzae (strain MAFF 311018).